We begin with the raw amino-acid sequence, 861 residues long: Bifunctional uridylyltransferase/uridylyl-removing enzyme (861 aa).

The uridylyltransferase stretch occupies residues 1–322 (MHTAAAATPA…FPTELGITRT (322 aa)). The uridylyl-removing stretch occupies residues 323-679 (INGRFVERQG…ARISPVGEGL (357 aa)). The region spanning 441–557 (VDQHILMVVR…RHFADQVGSE (117 aa)) is the HD domain. ACT domains lie at 680–763 (QVAV…AEPP) and 792–861 (LLSL…ALAI).

The protein belongs to the GlnD family. Mg(2+) is required as a cofactor.

The catalysed reaction is [protein-PII]-L-tyrosine + UTP = [protein-PII]-uridylyl-L-tyrosine + diphosphate. It carries out the reaction [protein-PII]-uridylyl-L-tyrosine + H2O = [protein-PII]-L-tyrosine + UMP + H(+). With respect to regulation, uridylyltransferase (UTase) activity is inhibited by glutamine, while glutamine activates uridylyl-removing (UR) activity. Its function is as follows. Modifies, by uridylylation and deuridylylation, the PII regulatory proteins (GlnB and homologs), in response to the nitrogen status of the cell that GlnD senses through the glutamine level. Under low glutamine levels, catalyzes the conversion of the PII proteins and UTP to PII-UMP and PPi, while under higher glutamine levels, GlnD hydrolyzes PII-UMP to PII and UMP (deuridylylation). Thus, controls uridylylation state and activity of the PII proteins, and plays an important role in the regulation of nitrogen assimilation and metabolism. This Ralstonia nicotianae (strain ATCC BAA-1114 / GMI1000) (Ralstonia solanacearum) protein is Bifunctional uridylyltransferase/uridylyl-removing enzyme.